A 1330-amino-acid chain; its full sequence is pre-mRNA 3' end processing protein WDR33 (1330 aa).

An N-acetylalanine modification is found at alanine 2. The residue at position 7 (serine 7) is a Phosphoserine. Lysine 46 carries the post-translational modification N6-acetyllysine. WD repeat units follow at residues 117 to 156 (KVKC…FETI), 159 to 198 (AHDS…VKMF), 200 to 239 (AHKE…EERI), 242 to 283 (GHGA…SLAT), 286 to 325 (AHKN…EELQ), 329 to 369 (GHKK…EVGG), and 373 to 412 (AHEG…DKMR). Residues lysine 526, lysine 530, and lysine 560 each participate in a glycyl lysine isopeptide (Lys-Gly) (interchain with G-Cter in SUMO2) cross-link. The interval 566–1330 (QKQADQIQPP…GTSRGSGRGR (765 aa)) is disordered. The span at 588-607 (FSGQGPISQIPQGFQQPHPS) shows a compositional bias: polar residues. One can recognise a Collagen-like domain in the interval 617–769 (GPPGPQGQFR…GPASQGIQGP (153 aa)). The segment covering 622 to 642 (QGQFRAPGPQGQMGPQGPPMH) has biased composition (low complexity). Over residues 682–694 (PHGPLGPQGPPGP) the composition is skewed to pro residues. Low complexity-rich tracts occupy residues 695-706 (QGSSGPQGHMGP) and 725-750 (QGHM…GMQG). Omega-N-methylarginine is present on arginine 776. Residues 848–863 (GPSGSQGQQGPPQGSL) show a composition bias toward low complexity. Asymmetric dimethylarginine is present on arginine 909. Low complexity predominate over residues 926 to 935 (PGLGQQGAQG). 2 stretches are compositionally biased toward basic and acidic residues: residues 965–983 (SERR…DRGP) and 992–1027 (GPPD…EFEG). Residue arginine 981 is modified to Omega-N-methylarginine. Arginine 1028 carries the post-translational modification Omega-N-methylarginine. Basic and acidic residues-rich tracts occupy residues 1049–1061 (PDHR…DGRG) and 1071–1115 (EGRR…RGRD). The span at 1123 to 1133 (FGPEEGFDASD) shows a compositional bias: acidic residues. 3 stretches are compositionally biased toward basic and acidic residues: residues 1134-1143 (EAARGRDLRG), 1163-1211 (EFPR…RERS), and 1236-1253 (SEHR…DRGS). Serine 1204 bears the Phosphoserine mark. An Omega-N-methylarginine modification is found at arginine 1256. Residues 1275 to 1287 (DGDHHDGYHRDEP) show a composition bias toward basic and acidic residues. Residues 1293–1323 (GSSSSSRGARSGSNWGRGSNMNSGPPRRGTS) show a composition bias toward low complexity. At arginine 1309 the chain carries Asymmetric dimethylarginine; alternate. Arginine 1309 is modified (omega-N-methylarginine; alternate).

This sequence belongs to the WD repeat WDR33 family. In terms of assembly, component of the cleavage and polyadenylation specificity factor (CPSF) module of the pre-mRNA 3'-end processing complex. Interacts with CPSF3/CPSF73. As to expression, most highly expressed in testis.

It localises to the nucleus. Functionally, essential for both cleavage and polyadenylation of pre-mRNA 3' ends. This chain is pre-mRNA 3' end processing protein WDR33 (Wdr33), found in Mus musculus (Mouse).